The primary structure comprises 274 residues: Undecaprenyl-diphosphatase 1 (274 aa).

8 helical membrane-spanning segments follow: residues 7 to 27, 48 to 68, 88 to 108, 115 to 135, 151 to 171, 189 to 209, 221 to 241, and 253 to 273; these read LEIF…WLPV, FIST…LVIF, VRLW…GILF, LFFN…IMIG, VTYK…IPGT, YVAA…ASAL, FEWL…IVVI, and FKVF…YFFL.

This sequence belongs to the UppP family.

The protein resides in the cell membrane. The catalysed reaction is di-trans,octa-cis-undecaprenyl diphosphate + H2O = di-trans,octa-cis-undecaprenyl phosphate + phosphate + H(+). Its function is as follows. Catalyzes the dephosphorylation of undecaprenyl diphosphate (UPP). Confers resistance to bacitracin. The chain is Undecaprenyl-diphosphatase 1 from Clostridioides difficile (strain 630) (Peptoclostridium difficile).